A 193-amino-acid polypeptide reads, in one-letter code: Inner membrane-spanning protein YciB (193 aa).

Helical transmembrane passes span 5-25 (TLDAIKPFLDWIPLIVFFYIY), 36-56 (IIAATTGLLIATLIVYGLMFV), 67-87 (WLVVVLTVVFGGLTMAFQDDF), 93-113 (APIINAVFAFGLAMSPLFLGG), 138-158 (VWVGFFTLMAVLQALFAFVWV), and 164-184 (FTAFGDMIVMVVFMVAQFWFL).

The protein belongs to the YciB family.

It localises to the cell inner membrane. Functionally, plays a role in cell envelope biogenesis, maintenance of cell envelope integrity and membrane homeostasis. The protein is Inner membrane-spanning protein YciB of Vitreoscilla sp. (strain C1).